Here is a 154-residue protein sequence, read N- to C-terminus: Interleukin-2 (154 aa).

An N-terminal signal peptide occupies residues 1-20; it reads MYKIQLLSCIALTLILVTNS. An intrachain disulfide couples C78 to C126. N-linked (GlcNAc...) asparagine glycosylation is present at N111.

This sequence belongs to the IL-2 family.

It localises to the secreted. In terms of biological role, cytokine produced by activated CD4-positive helper T-cells and to a lesser extend activated CD8-positive T-cells and natural killer (NK) cells that plays pivotal roles in the immune response and tolerance. Binds to a receptor complex composed of either the high-affinity trimeric IL-2R (IL2RA/CD25, IL2RB/CD122 and IL2RG/CD132) or the low-affinity dimeric IL-2R (IL2RB and IL2RG). Interaction with the receptor leads to oligomerization and conformation changes in the IL-2R subunits resulting in downstream signaling starting with phosphorylation of JAK1 and JAK3. In turn, JAK1 and JAK3 phosphorylate the receptor to form a docking site leading to the phosphorylation of several substrates including STAT5. This process leads to activation of several pathways including STAT, phosphoinositide-3-kinase/PI3K and mitogen-activated protein kinase/MAPK pathways. Functions as a T-cell growth factor and can increase NK-cell cytolytic activity as well. Promotes strong proliferation of activated B-cells and subsequently immunoglobulin production. Plays a pivotal role in regulating the adaptive immune system by controlling the survival and proliferation of regulatory T-cells, which are required for the maintenance of immune tolerance. Moreover, participates in the differentiation and homeostasis of effector T-cell subsets, including Th1, Th2, Th17 as well as memory CD8-positive T-cells. This is Interleukin-2 (IL2) from Felis catus (Cat).